The following is a 138-amino-acid chain: Small ribosomal subunit protein uS9 (138 aa).

A compositionally biased stretch (basic and acidic residues) spans Pro100–Ala118. The tract at residues Pro100–Arg138 is disordered. The segment covering Lys119–Arg138 has biased composition (basic residues).

Belongs to the universal ribosomal protein uS9 family.

The polypeptide is Small ribosomal subunit protein uS9 (Trichormus variabilis (strain ATCC 29413 / PCC 7937) (Anabaena variabilis)).